Here is a 241-residue protein sequence, read N- to C-terminus: Large ribosomal subunit protein uL3 (241 aa).

Disordered regions lie at residues 139–166 (VSHR…PGHM) and 209–241 (KKPL…KEGA). Gln151 is subject to N5-methylglutamine.

It belongs to the universal ribosomal protein uL3 family. As to quaternary structure, part of the 50S ribosomal subunit. Forms a cluster with proteins L14 and L19. Methylated by PrmB.

One of the primary rRNA binding proteins, it binds directly near the 3'-end of the 23S rRNA, where it nucleates assembly of the 50S subunit. The protein is Large ribosomal subunit protein uL3 of Nitrobacter hamburgensis (strain DSM 10229 / NCIMB 13809 / X14).